The sequence spans 1613 residues: Reverse gyrase (1613 aa).

The segment at 1–38 (MIPMIYKEMCPNCNGEITSERLAIGVCEKCLKEENVFE) adopts an RG N-terminal-type zinc-finger fold. Residues cysteine 10, cysteine 13, cysteine 27, and cysteine 30 each coordinate Zn(2+). ATP-binding positions include glutamine 83 and 100 to 107 (VPTGVGKS). The Helicase ATP-binding domain occupies 87 to 291 (AKRVLKNKSF…LYRELLDFEI (205 aa)). The DEAD box motif lies at 203-206 (DDVD). The Helicase C-terminal domain maps to 310–525 (SKEKILEYIK…IDEVNLEELI (216 aa)). The tract at residues 546–1613 (DLLKSVLMVV…ALHEEILSIR (1068 aa)) is topoisomerase I. The Toprim domain occupies 550–712 (SVLMVVESPN…NIYRVGFNEI (163 aa)). Mg(2+) contacts are provided by glutamate 556 and aspartate 681. Positions 733-1613 (DENKVKGQVV…ALHEEILSIR (881 aa)) constitute a Topo IA-type catalytic domain. A DOD-type homing endonuclease domain is found at 1070-1199 (FAGLVLGDGS…IGIYLNSIGI (130 aa)). Residue tyrosine 1363 is the O-(5'-phospho-DNA)-tyrosine intermediate of the active site.

This sequence in the N-terminal section; belongs to the DEAD box helicase family. DDVD subfamily. The protein in the C-terminal section; belongs to the type IA topoisomerase family. Monomer. Requires Zn(2+) as cofactor. The cofactor is Mg(2+). In terms of processing, this protein undergoes a protein self splicing that involves a post-translational excision of the intervening region (intein) followed by peptide ligation.

The protein resides in the cytoplasm. The catalysed reaction is ATP + H2O = ADP + phosphate + H(+). Its function is as follows. Modifies the topological state of DNA by introducing positive supercoils in an ATP-dependent process, increasing the linking number in steps of +1. Binds to single-stranded DNA, transiently cleaves and then rejoins the ends, introducing a positive supercoil in the process. The scissile phosphodiester is attacked by the catalytic tyrosine of the enzyme, resulting in the formation of a DNA-(5'-phosphotyrosyl)-enzyme intermediate. Probably involved in rewinding DNA strands in regions of the chromosome that have opened up to allow replication, transcription, DNA repair and/or for DNA protection. The polypeptide is Reverse gyrase (Methanocaldococcus jannaschii (strain ATCC 43067 / DSM 2661 / JAL-1 / JCM 10045 / NBRC 100440) (Methanococcus jannaschii)).